A 167-amino-acid polypeptide reads, in one-letter code: Ribosome maturation factor RimP (167 aa).

It belongs to the RimP family.

Its subcellular location is the cytoplasm. Functionally, required for maturation of 30S ribosomal subunits. This Cytophaga hutchinsonii (strain ATCC 33406 / DSM 1761 / CIP 103989 / NBRC 15051 / NCIMB 9469 / D465) protein is Ribosome maturation factor RimP.